Here is a 343-residue protein sequence, read N- to C-terminus: E3 ubiquitin-protein ligase RNF113A (343 aa).

A2 bears the N-acetylalanine mark. The tract at residues 2–60 is important for interaction with SNRNP200/BRR2; the sequence is AEQLSPGKAVDQVCTFLFKKPGRKGAAGRRKRPACDPEPGESGSSSDEGCTVVRPEKKR. S6 carries the post-translational modification Phosphoserine. Over residues 22-33 the composition is skewed to basic residues; that stretch reads PGRKGAAGRRKR. The disordered stretch occupies residues 22–96; it reads PGRKGAAGRR…EEEENEPESL (75 aa). The span at 41–50 shows a compositional bias: low complexity; it reads GESGSSSDEG. Residues 50–61 form an important for interaction with CXCR4 region; sequence GCTVVRPEKKRV. Phosphoserine occurs at positions 84 and 85. Residues 84–93 show a composition bias toward acidic residues; the sequence is SSEEEEENEP. Residues 196-224 form a C3H1-type zinc finger; the sequence is DYQPDICKDYKETGFCGFGDSCKFLHDRS. S253 carries the phosphoserine modification. An RING-type zinc finger spans residues 262 to 300; that stretch reads CFICRQSFQNPVVTKCRHYFCESCALQHFRTTPRCYVCD. The disordered stretch occupies residues 322 to 343; the sequence is ATGEGGASDLPEDPDEDAIPIT. The segment covering 331 to 343 has biased composition (acidic residues); that stretch reads LPEDPDEDAIPIT.

As to quaternary structure, component of pre-catalytic and catalytic spliceosome complexes. Interacts (via N-terminus) with the spliceosome subunit SNRNP200/BRR2. Component of the minor spliceosome, which splices U12-type introns. Within this complex, interacts with SCNM1 and CRIPT. Ubiquitous.

It is found in the nucleus. Its subcellular location is the nucleus speckle. The catalysed reaction is S-ubiquitinyl-[E2 ubiquitin-conjugating enzyme]-L-cysteine + [acceptor protein]-L-lysine = [E2 ubiquitin-conjugating enzyme]-L-cysteine + N(6)-ubiquitinyl-[acceptor protein]-L-lysine.. The protein operates within protein modification; protein ubiquitination. Functionally, required for pre-mRNA splicing as component of the spliceosome. As a component of the minor spliceosome, involved in the splicing of U12-type introns in pre-mRNAs. E3 ubiquitin-protein ligase that catalyzes the transfer of ubiquitin onto target proteins. Catalyzes polyubiquitination of SNRNP200/BRR2 with non-canonical 'Lys-63'-linked polyubiquitin chains. Plays a role in DNA repair via its role in the synthesis of 'Lys-63'-linked polyubiquitin chains that recruit ALKBH3 and the ASCC complex to sites of DNA damage by alkylating agents. Ubiquitinates CXCR4, leading to its degradation, and thereby contributes to the termination of CXCR4 signaling. The protein is E3 ubiquitin-protein ligase RNF113A (RNF113A) of Homo sapiens (Human).